The following is a 1563-amino-acid chain: DNA-directed RNA polymerase subunit beta' (1563 aa).

Residues C61, C63, C76, and C79 each coordinate Zn(2+). Mg(2+)-binding residues include D588, D590, and D592. Positions 925, 999, 1006, and 1009 each coordinate Zn(2+).

It belongs to the RNA polymerase beta' chain family. As to quaternary structure, the RNAP catalytic core consists of 2 alpha, 1 beta, 1 beta' and 1 omega subunit. When a sigma factor is associated with the core the holoenzyme is formed, which can initiate transcription. Mg(2+) is required as a cofactor. Zn(2+) serves as cofactor.

It catalyses the reaction RNA(n) + a ribonucleoside 5'-triphosphate = RNA(n+1) + diphosphate. DNA-dependent RNA polymerase catalyzes the transcription of DNA into RNA using the four ribonucleoside triphosphates as substrates. The chain is DNA-directed RNA polymerase subunit beta' from Hydrogenobaculum sp. (strain Y04AAS1).